We begin with the raw amino-acid sequence, 187 residues long: Oleosin Zm-II (187 aa).

A2 is subject to N-acetylalanine. Residues 2-51 (ADRDRSGIYGGAHATYGQQQQQGGGGRPMGEQVKKGMLHDKGPTASQALT) form a polar region. The segment at 17–42 (YGQQQQQGGGGRPMGEQVKKGMLHDK) is disordered. Residues 33–42 (QVKKGMLHDK) are compositionally biased toward basic and acidic residues. 3 helical membrane-spanning segments follow: residues 50–70 (LTVA…GLAL), 83–103 (VFLI…TAVM), and 104–124 (GFLT…CLAN). Positions 52–123 (VATLFPLGGL…GGLSSLTCLA (72 aa)) are hydrophobic. Residues 155 to 169 (TAQAGQAIQGRAQEA) are compositionally biased toward low complexity. Positions 155 to 187 (TAQAGQAIQGRAQEAGTGGGAGAGAGGGGRASS) are disordered. Over residues 170 to 187 (GTGGGAGAGAGGGGRASS) the composition is skewed to gly residues.

This sequence belongs to the oleosin family. The N-terminus is blocked. Found in embryonic axis, scutellum, and aleurone layer.

The protein resides in the lipid droplet. Its subcellular location is the membrane. In terms of biological role, may have a structural role to stabilize the lipid body during desiccation of the seed by preventing coalescence of the oil. Probably interacts with both lipid and phospholipid moieties of lipid bodies. May also provide recognition signals for specific lipase anchorage in lipolysis during seedling growth. This chain is Oleosin Zm-II (OLE18), found in Zea mays (Maize).